Here is a 133-residue protein sequence, read N- to C-terminus: Small ribosomal subunit protein uS8 (133 aa).

It belongs to the universal ribosomal protein uS8 family. Part of the 30S ribosomal subunit. Contacts proteins S5 and S12.

One of the primary rRNA binding proteins, it binds directly to 16S rRNA central domain where it helps coordinate assembly of the platform of the 30S subunit. This chain is Small ribosomal subunit protein uS8, found in Prochlorococcus marinus (strain MIT 9313).